A 184-amino-acid polypeptide reads, in one-letter code: NADH-quinone oxidoreductase subunit B (184 aa).

[4Fe-4S] cluster-binding residues include cysteine 37, cysteine 38, cysteine 103, and cysteine 132.

Belongs to the complex I 20 kDa subunit family. As to quaternary structure, NDH-1 is composed of 14 different subunits. Subunits NuoB, C, D, E, F, and G constitute the peripheral sector of the complex. The cofactor is [4Fe-4S] cluster.

It localises to the cell membrane. It carries out the reaction a quinone + NADH + 5 H(+)(in) = a quinol + NAD(+) + 4 H(+)(out). Its function is as follows. NDH-1 shuttles electrons from NADH, via FMN and iron-sulfur (Fe-S) centers, to quinones in the respiratory chain. The immediate electron acceptor for the enzyme in this species is believed to be a menaquinone. Couples the redox reaction to proton translocation (for every two electrons transferred, four hydrogen ions are translocated across the cytoplasmic membrane), and thus conserves the redox energy in a proton gradient. This is NADH-quinone oxidoreductase subunit B from Mycobacterium marinum (strain ATCC BAA-535 / M).